Reading from the N-terminus, the 230-residue chain is A-type ATP synthase subunit D (230 aa).

A disordered region spans residues 204–230; sequence AKKEEEEDALAAEEEAEEEPEAVTADD. The segment covering 208 to 230 has biased composition (acidic residues); that stretch reads EEEDALAAEEEAEEEPEAVTADD.

This sequence belongs to the V-ATPase D subunit family. In terms of assembly, has multiple subunits with at least A(3), B(3), C, D, E, F, H, I and proteolipid K(x).

It is found in the cell membrane. In terms of biological role, component of the A-type ATP synthase that produces ATP from ADP in the presence of a proton gradient across the membrane. This chain is A-type ATP synthase subunit D, found in Haloarcula marismortui (strain ATCC 43049 / DSM 3752 / JCM 8966 / VKM B-1809) (Halobacterium marismortui).